Here is a 437-residue protein sequence, read N- to C-terminus: Methylenetetrahydrofolate--tRNA-(uracil-5-)-methyltransferase TrmFO (437 aa).

10-15 (GAGLAG) contacts FAD.

This sequence belongs to the MnmG family. TrmFO subfamily. The cofactor is FAD.

Its subcellular location is the cytoplasm. The enzyme catalyses uridine(54) in tRNA + (6R)-5,10-methylene-5,6,7,8-tetrahydrofolate + NADH + H(+) = 5-methyluridine(54) in tRNA + (6S)-5,6,7,8-tetrahydrofolate + NAD(+). It carries out the reaction uridine(54) in tRNA + (6R)-5,10-methylene-5,6,7,8-tetrahydrofolate + NADPH + H(+) = 5-methyluridine(54) in tRNA + (6S)-5,6,7,8-tetrahydrofolate + NADP(+). In terms of biological role, catalyzes the folate-dependent formation of 5-methyl-uridine at position 54 (M-5-U54) in all tRNAs. The sequence is that of Methylenetetrahydrofolate--tRNA-(uracil-5-)-methyltransferase TrmFO from Pelotomaculum thermopropionicum (strain DSM 13744 / JCM 10971 / SI).